Consider the following 60-residue polypeptide: DNA-directed RNA polymerase subunit Rpo6 (60 aa).

This sequence belongs to the archaeal Rpo6/eukaryotic RPB6 RNA polymerase subunit family. In terms of assembly, part of the RNA polymerase complex.

Its subcellular location is the cytoplasm. The catalysed reaction is RNA(n) + a ribonucleoside 5'-triphosphate = RNA(n+1) + diphosphate. Functionally, DNA-dependent RNA polymerase (RNAP) catalyzes the transcription of DNA into RNA using the four ribonucleoside triphosphates as substrates. This Methanosarcina acetivorans (strain ATCC 35395 / DSM 2834 / JCM 12185 / C2A) protein is DNA-directed RNA polymerase subunit Rpo6.